Consider the following 959-residue polypeptide: MSDSKKPTPEKSKYPVNLLDTPFPMRGDLPKREPLWVKQWQDKQLYKKIRAARKGAKKFILHDGPPYANGDLHIGHAVNKILKDMVIKARGLTGLDAVYVPGWDCHGMPIEIQIEKQFGKGLPVKEVQEKARAYATGQIARQKADFERLGVLGDWADPYLTMNFRNEADEVRALGKILEKGYVFRGLKPVNWCFDCGSALAEAEVEYADRTDLSIDVGFPFADIDALASAFHVGADVLKAKPGWIVIWTTTPWTIPSNQALNLHPEIEYALVDTSRGLLIVAKERVEACLQSWKLEGTVLATCEGAALNGVRFHHPLAKMDAGYDRTSPVYLGDYVTIDTGTGIVHSAPAYGVEDFQSCKAHNMPDSEIINPVMGNGVYASTLPLFGGQMIWDANPKIVEVLRESGNLFDAHKYAHSYMHCWRHKTPIIYRATSQWFAGMDVQPNDGNATLRETALAGIDATAFYPSWGKQRLHNMIANRPDWTLSRQRQWGVPMAFFVHKETGALHPRTPELLEQVAQRIEKSGIEAWQTLDPRELLGDEADMYEKNRDTLDVWFDSGTTHWHVIRGSHAADLYDASADLPDGRLADLYLEGSDQHRGWFHSSLLTASMLYGKPPYKGLLTHGFTVDGEGRKMSKSIGNTIAPQEIANKMGAEIIRLWVASTDYSGELAISDEILKRVVEGYRRIRNTLRFLLANLTDYDHAKHALPTEQWLEIDRYAVALTDALQKEVLSHYDVYEFHPVVAKLQTFCSEDLGGFYLDVLKDRLYTTAPDSVARRSAQNALYHITQAMLHWMAPFLSFTAEEAWQVFAHGTEHTDTIFTSTYYNAPVPQGASALLEKWAAIRNVRGEVTKQLEALRIDGKIGSSLQAEVTVSAGESVHDALASLGDDLRFVLITSAAKLERAPEGGDLLITVVPSTHSKCERCWHYRADVGHDHAHPTLCKRCTDNLFGSGEQRSAA.

Residues proline 66–histidine 76 carry the 'HIGH' region motif. L-isoleucyl-5'-AMP is bound at residue glutamate 592. Residues lysine 633 to serine 637 carry the 'KMSKS' region motif. Lysine 636 is a binding site for ATP. Zn(2+) contacts are provided by cysteine 922, cysteine 925, cysteine 942, and cysteine 945.

The protein belongs to the class-I aminoacyl-tRNA synthetase family. IleS type 1 subfamily. In terms of assembly, monomer. The cofactor is Zn(2+).

The protein localises to the cytoplasm. It carries out the reaction tRNA(Ile) + L-isoleucine + ATP = L-isoleucyl-tRNA(Ile) + AMP + diphosphate. Catalyzes the attachment of isoleucine to tRNA(Ile). As IleRS can inadvertently accommodate and process structurally similar amino acids such as valine, to avoid such errors it has two additional distinct tRNA(Ile)-dependent editing activities. One activity is designated as 'pretransfer' editing and involves the hydrolysis of activated Val-AMP. The other activity is designated 'posttransfer' editing and involves deacylation of mischarged Val-tRNA(Ile). The polypeptide is Isoleucine--tRNA ligase (Ralstonia pickettii (strain 12J)).